The sequence spans 96 residues: Accessory cholera enterotoxin (96 aa).

The chain crosses the membrane as a helical span at residues 76–96 (QALAIVLQALMTRFALRALNL).

Its subcellular location is the secreted. The protein localises to the host cell membrane. In terms of biological role, increases short-circuit current in rabbit ileal tissue mounted in Ussing chambers, by increasing the potential difference. Cultures of V.cholerae containing the cloned ace gene cause fluid secretion in ligated rabbit ileal loops. The polypeptide is Accessory cholera enterotoxin (ace) (Vibrio cholerae serotype O1 (strain ATCC 39315 / El Tor Inaba N16961)).